A 216-amino-acid chain; its full sequence is Pyrrolidone-carboxylate peptidase (216 aa).

Active-site residues include E80, C143, and H168.

It belongs to the peptidase C15 family. As to quaternary structure, homotetramer.

It localises to the cytoplasm. The enzyme catalyses Release of an N-terminal pyroglutamyl group from a polypeptide, the second amino acid generally not being Pro.. Removes 5-oxoproline from various penultimate amino acid residues except L-proline. The chain is Pyrrolidone-carboxylate peptidase from Cupriavidus pinatubonensis (strain JMP 134 / LMG 1197) (Cupriavidus necator (strain JMP 134)).